An 87-amino-acid polypeptide reads, in one-letter code: Small ribosomal subunit protein uS19 (87 aa).

This sequence belongs to the universal ribosomal protein uS19 family.

In terms of biological role, protein S19 forms a complex with S13 that binds strongly to the 16S ribosomal RNA. The protein is Small ribosomal subunit protein uS19 (rpsS) of Mycoplasma pneumoniae (strain ATCC 29342 / M129 / Subtype 1) (Mycoplasmoides pneumoniae).